We begin with the raw amino-acid sequence, 124 residues long: Ribulose bisphosphate carboxylase small subunit (124 aa).

This sequence belongs to the RuBisCO small chain family. Heterohexadecamer of 8 large and 8 small subunits.

Functionally, ruBisCO catalyzes two reactions: the carboxylation of D-ribulose 1,5-bisphosphate, the primary event in carbon dioxide fixation, as well as the oxidative fragmentation of the pentose substrate. Both reactions occur simultaneously and in competition at the same active site. Although the small subunit is not catalytic it is essential for maximal activity. The polypeptide is Ribulose bisphosphate carboxylase small subunit (Hydrogenophilus thermoluteolus (Pseudomonas hydrogenothermophila)).